The sequence spans 247 residues: LOB domain-containing protein 38 (247 aa).

Residues 1–107 (MSCNGCRVLR…VETVLRGGSL (107 aa)) enclose the LOB domain. Residues 157 to 170 (FSSSRSRSRSTASP) are compositionally biased toward low complexity. Positions 157-184 (FSSSRSRSRSTASPPKRKRLSSEQQPSS) are disordered.

Belongs to the LOB domain-containing protein family. As to expression, expressed in young shoots, roots, stems, leaves and flowers.

The protein is LOB domain-containing protein 38 (LBD38) of Arabidopsis thaliana (Mouse-ear cress).